The primary structure comprises 113 residues: Pro-corazonin (113 aa).

The signal sequence occupies residues M1–A19. A Pyrrolidone carboxylic acid modification is found at Q20. N30 is modified (asparagine amide). The segment at L74–V96 is disordered. Residues T82–V96 are compositionally biased toward polar residues.

This sequence belongs to the corazonin family. In terms of tissue distribution, four pairs of lateral neurosecretory cells in the brains of late instar larvae, pupae and adults.

The protein resides in the secreted. Its function is as follows. Cardioactive peptide. Corazonin is probably involved in the physiological regulation of the heart beat. The sequence is that of Pro-corazonin from Galleria mellonella (Greater wax moth).